A 1956-amino-acid polypeptide reads, in one-letter code: Histone-lysine N-methyltransferase SETD1B (1956 aa).

Positions 1-20 (MSFKEAKPGERGKNPEDHGR) are enriched in basic and acidic residues. Residues 1–46 (MSFKEAKPGERGKNPEDHGRKQTASWINGMEAGNQPSTSGEKKSHH) form a disordered region. The region spanning 111 to 199 (DEFYVGPVPP…NIIHVELDTK (89 aa)) is the RRM domain. Disordered regions lie at residues 226–478 (LDAS…LEAE), 502–637 (IAGD…VTPS), 662–696 (GFPP…VTVP), 926–1148 (KEPP…DEMQ), 1341–1386 (EDLP…TLTS), 1420–1464 (PTFP…VPSP), 1512–1553 (HLTS…NYET), 1627–1655 (TKHK…FSPP), and 1766–1790 (IDTQ…RRSE). Polar residues-rich tracts occupy residues 254-290 (VTPN…QGTP), 298-312 (PFSQ…QTTP), and 346-361 (SSGS…NVTR). Residues 363 to 373 (QPEPVQVPRTP) are compositionally biased toward pro residues. 3 stretches are compositionally biased toward polar residues: residues 375–407 (LSHS…PQTS), 416–432 (GPQT…NSAS), and 451–464 (DSTT…SQTP). Residues 517–527 (SPISSSSSQLS) show a composition bias toward low complexity. Polar residues-rich tracts occupy residues 535-551 (GSRY…SSTG) and 575-593 (SLCQ…NQSG). A compositionally biased stretch (basic and acidic residues) spans 594-605 (RKTESLDKKELV). A compositionally biased stretch (acidic residues) spans 625 to 634 (EDMEISDDEV). Over residues 986 to 1000 (SEGEEEVESEGDDGE) the composition is skewed to acidic residues. Residues 1001 to 1011 (TSDKEDSSSEK) show a composition bias toward basic and acidic residues. Acidic residues predominate over residues 1068–1122 (DSSDESEESSEYESSSDSDEKEEEDDEEEELVFGDDQSEDQDLGQEYEVETDREE). Basic and acidic residues predominate over residues 1341–1352 (EDLPRTPGRDIV). 2 stretches are compositionally biased toward polar residues: residues 1358-1367 (LGKSQSTETV) and 1450-1462 (EPTS…NSVP). The segment covering 1541–1551 (SAHEFETEKNY) has biased composition (basic and acidic residues). Basic residues predominate over residues 1628-1638 (KHKKSRNSRHN). Over residues 1769 to 1783 (QGKSIPAQPQASTRA) the composition is skewed to polar residues. A RxxxRR motif motif is present at residues 1788-1793 (RSEQRR). The 118-residue stretch at 1817-1934 (KKLRFCKSHI…VNEEITYDYK (118 aa)) folds into the SET domain. Position 1933 (Tyr-1933) interacts with S-adenosyl-L-methionine. Positions 1940-1956 (VKIPCLCGAENCRGTLN) constitute a Post-SET domain.

This sequence belongs to the class V-like SAM-binding methyltransferase superfamily. Component of the SET1B/COMPASS complex.

Its subcellular location is the nucleus speckle. The protein localises to the chromosome. The enzyme catalyses L-lysyl(4)-[histone H3] + 3 S-adenosyl-L-methionine = N(6),N(6),N(6)-trimethyl-L-lysyl(4)-[histone H3] + 3 S-adenosyl-L-homocysteine + 3 H(+). Histone methyltransferase that specifically methylates 'Lys-4' of histone H3, when part of the SET1 histone methyltransferase (HMT) complex, but not if the neighboring 'Lys-9' residue is already methylated. H3 'Lys-4' methylation represents a specific tag for epigenetic transcriptional activation. This Xenopus tropicalis (Western clawed frog) protein is Histone-lysine N-methyltransferase SETD1B (setd1b).